A 1247-amino-acid chain; its full sequence is Clustered mitochondria protein homolog (1247 aa).

Residues 1 to 43 form a disordered region; sequence MTLGSETKTDVEVPIINGKHEIPQEENDSGHSSINTPDSSEPD. The span at 30 to 39 shows a compositional bias: polar residues; the sequence is GHSSINTPDS. A Clu domain is found at 329 to 579; sequence SDSLRAIELT…RSMPPDVHYL (251 aa). The segment at 1222-1247 is disordered; that stretch reads GKQQNGTTEESKTTDVAAQLDNETLD.

Belongs to the CLU family.

Its subcellular location is the cytoplasm. Functionally, mRNA-binding protein involved in proper cytoplasmic distribution of mitochondria. The polypeptide is Clustered mitochondria protein homolog (Caenorhabditis elegans).